Consider the following 302-residue polypeptide: Forkhead box protein R2 (302 aa).

Positions 183-285 (RPPLNYSHLV…RVLAYARRES (103 aa)) form a DNA-binding region, fork-head.

It is found in the nucleus. The polypeptide is Forkhead box protein R2 (Foxr2) (Mus musculus (Mouse)).